The chain runs to 792 residues: MSSYQSEFNADEQAAIDKEFTRLANNKSIYLDHAGTTLYAESQVTAAAEQLQRDVICNPHTCRVTGDYVDQVRFKVLEFFNTKEDDYHVIFTANATAALSLVAENFDFGRQGNFHYCQENHTSVLGMRERVQARAMYMLKEEEITGMASLPSAANGVDGSSPGDNSLVTFSAQCNFSGYKIPLAAIAGIQKQGLAHGLGKRVSGEAPQTTDNNNYYVCLDAASFVATNPLDLQRYRPDYVCISFYKIFGYPTGVGALLVSRRGAEAFRKKRNFFGGGTINYAYPHAMDHQLREVFHQRYEDGTLPFLSIVGLLEGFRTLGRLVPRRSDVATMERISRHVHGLAQYLEKQLRQLKYPNGQPLIELYNRVGYEERHRQGGIVAFNVRTDAGPFVGFGEIACVAALQGILLRTGCFCNIGACQRYLGLDETMMDAIYKRAGRICGDYYDLIDGQPTGAVRVSFGYMTRRQDVDELLKMLQLSYLATKPQQRLQLIEEQAGELPKALKERAQRLRPQLLQLAIYPVKSCAAFKIKEGGGGGGAGAGRTWPLTAQGLQYDREWMIVDMNGMAVTQKRCSELCLIRPLIRDDQLVLHFGDSPAGVSLPLSLADQAENSSRCRSKVCRQPVEGLDCGDEVALWLSQHLGLEGLRLLRQSSQRSASNGVRQQQKLSLVNQAQFLLVNRSSVRSLQFEESLDETVDRFRANIIIDTGSAFEELSYKQLTIGQVQFQVEGPCQRCDMICINQRTGERSPETLTTISRLQSGKMRFGIYISRISTENNKEQQHLTCGDVVVVT.

At Lys-246 the chain carries N6-(pyridoxal phosphate)lysine. Cys-414 is a catalytic residue. The MOSC domain occupies 646-792 (LRLLRQSSQR…LTCGDVVVVT (147 aa)). The residue at position 748 (Ser-748) is a Phosphoserine.

This sequence belongs to the class-V pyridoxal-phosphate-dependent aminotransferase family. MOCOS subfamily. Pyridoxal 5'-phosphate serves as cofactor.

It carries out the reaction Mo-molybdopterin + L-cysteine + AH2 = thio-Mo-molybdopterin + L-alanine + A + H2O. The protein operates within cofactor biosynthesis; molybdopterin biosynthesis. In terms of biological role, sulfurates the molybdenum cofactor. Sulfation of molybdenum is essential for xanthine dehydrogenase (XDH) and aldehyde oxidase (ADO) enzymes in which molybdenum cofactor is liganded by 1 oxygen and 1 sulfur atom in active form. The protein is Molybdenum cofactor sulfurase of Drosophila pseudoobscura pseudoobscura (Fruit fly).